The following is a 449-amino-acid chain: Xaa-Pro dipeptidase (449 aa).

Mn(2+) contacts are provided by Asp246, Asp257, His345, Glu390, and Glu429.

It belongs to the peptidase M24B family. Bacterial-type prolidase subfamily. Mn(2+) is required as a cofactor.

It carries out the reaction Xaa-L-Pro dipeptide + H2O = an L-alpha-amino acid + L-proline. Functionally, splits dipeptides with a prolyl residue in the C-terminal position. The sequence is that of Xaa-Pro dipeptidase from Yersinia enterocolitica serotype O:8 / biotype 1B (strain NCTC 13174 / 8081).